Consider the following 760-residue polypeptide: Xaa-Pro dipeptidyl-peptidase (760 aa).

Residues Ser-349, Asp-469, and His-499 each act as charge relay system in the active site.

Belongs to the peptidase S15 family. As to quaternary structure, homodimer.

The protein resides in the cytoplasm. The enzyme catalyses Hydrolyzes Xaa-Pro-|- bonds to release unblocked, N-terminal dipeptides from substrates including Ala-Pro-|-p-nitroanilide and (sequentially) Tyr-Pro-|-Phe-Pro-|-Gly-Pro-|-Ile.. In terms of biological role, removes N-terminal dipeptides sequentially from polypeptides having unsubstituted N-termini provided that the penultimate residue is proline. This Streptococcus pyogenes serotype M2 (strain MGAS10270) protein is Xaa-Pro dipeptidyl-peptidase.